Consider the following 299-residue polypeptide: tRNA dimethylallyltransferase (299 aa).

Gly11–Thr18 serves as a coordination point for ATP. Thr13 to Thr18 contributes to the substrate binding site. The interval Asp36–Gln39 is interaction with substrate tRNA.

Belongs to the IPP transferase family. Monomer. The cofactor is Mg(2+).

The enzyme catalyses adenosine(37) in tRNA + dimethylallyl diphosphate = N(6)-dimethylallyladenosine(37) in tRNA + diphosphate. Its function is as follows. Catalyzes the transfer of a dimethylallyl group onto the adenine at position 37 in tRNAs that read codons beginning with uridine, leading to the formation of N6-(dimethylallyl)adenosine (i(6)A). This is tRNA dimethylallyltransferase from Streptococcus pyogenes serotype M49 (strain NZ131).